The primary structure comprises 349 residues: MPVLHNRISNETLKERMLAETEPRITISFYKYFSIAEPQETRDALYKAFESLNVFGRVYLAHEGINAQISVPESKVSAFRDFLYSFDPALNNVRLNIALDDDGKSFWVLRMKVRERIVADGIDDPTFNASDVGEYLKAAEVNAMLDDPDAVFIDMRNHYEYEVGHFENALEIPADTFREQLPKAVEMMQEHKDKKIIMYCTGGIRCEKASAWMKHSGFNKVWHIEGGIIEYARRAREQGLPVRFIGKNFVFDERMGERISEDIIAHCHQCGTPCDTHTNCKNDGCHLLFIQCPTCAEKFRGCCSELCSEESVLPEEEQRRRRAGRENGNKIFNKSRGRLNTKLGIPDPE.

One can recognise a Rhodanese domain in the interval 146–240 (DDPDAVFIDM…YARRAREQGL (95 aa)). Catalysis depends on C200, which acts as the Cysteine persulfide intermediate. Basic and acidic residues predominate over residues 316–328 (EEQRRRRAGRENG). A disordered region spans residues 316-349 (EEQRRRRAGRENGNKIFNKSRGRLNTKLGIPDPE).

Belongs to the TrhO family.

The enzyme catalyses uridine(34) in tRNA + AH2 + O2 = 5-hydroxyuridine(34) in tRNA + A + H2O. In terms of biological role, catalyzes oxygen-dependent 5-hydroxyuridine (ho5U) modification at position 34 in tRNAs. This Enterobacter sp. (strain 638) protein is tRNA uridine(34) hydroxylase.